A 160-amino-acid chain; its full sequence is SsrA-binding protein (160 aa).

Belongs to the SmpB family.

The protein resides in the cytoplasm. Functionally, required for rescue of stalled ribosomes mediated by trans-translation. Binds to transfer-messenger RNA (tmRNA), required for stable association of tmRNA with ribosomes. tmRNA and SmpB together mimic tRNA shape, replacing the anticodon stem-loop with SmpB. tmRNA is encoded by the ssrA gene; the 2 termini fold to resemble tRNA(Ala) and it encodes a 'tag peptide', a short internal open reading frame. During trans-translation Ala-aminoacylated tmRNA acts like a tRNA, entering the A-site of stalled ribosomes, displacing the stalled mRNA. The ribosome then switches to translate the ORF on the tmRNA; the nascent peptide is terminated with the 'tag peptide' encoded by the tmRNA and targeted for degradation. The ribosome is freed to recommence translation, which seems to be the essential function of trans-translation. The polypeptide is SsrA-binding protein (Marinobacter nauticus (strain ATCC 700491 / DSM 11845 / VT8) (Marinobacter aquaeolei)).